A 155-amino-acid chain; its full sequence is Small ribosomal subunit protein uS7c (155 aa).

It belongs to the universal ribosomal protein uS7 family. In terms of assembly, part of the 30S ribosomal subunit.

The protein resides in the plastid. It localises to the chloroplast. One of the primary rRNA binding proteins, it binds directly to 16S rRNA where it nucleates assembly of the head domain of the 30S subunit. This Staurastrum punctulatum (Green alga) protein is Small ribosomal subunit protein uS7c (rps7).